A 309-amino-acid polypeptide reads, in one-letter code: Probable cell division protein WhiA (309 aa).

The segment at residues 275–309 (SLKELGELVPGGPISKSGINHRLRKINQYAEKLRA) is a DNA-binding region (H-T-H motif).

It belongs to the WhiA family.

Involved in cell division and chromosome segregation. In Pediococcus pentosaceus (strain ATCC 25745 / CCUG 21536 / LMG 10740 / 183-1w), this protein is Probable cell division protein WhiA.